A 1024-amino-acid polypeptide reads, in one-letter code: Beta-galactosidase (1024 aa).

Residues N103 and D202 each coordinate substrate. D202 is a binding site for Na(+). Mg(2+) contacts are provided by E417, H419, and E462. Residues E462 and E538–H541 each bind substrate. E462 functions as the Proton donor in the catalytic mechanism. Catalysis depends on E538, which acts as the Nucleophile. N598 is a Mg(2+) binding site. Positions 602 and 605 each coordinate Na(+). Substrate is bound by residues N605 and W1000.

The protein belongs to the glycosyl hydrolase 2 family. As to quaternary structure, homotetramer. Mg(2+) serves as cofactor. It depends on Na(+) as a cofactor.

It catalyses the reaction Hydrolysis of terminal non-reducing beta-D-galactose residues in beta-D-galactosides.. This Escherichia coli O157:H7 protein is Beta-galactosidase.